A 137-amino-acid chain; its full sequence is 3-hydroxyacyl-[acyl-carrier-protein] dehydratase FabZ (137 aa).

H46 is a catalytic residue.

This sequence belongs to the thioester dehydratase family. FabZ subfamily.

It localises to the cytoplasm. It catalyses the reaction a (3R)-hydroxyacyl-[ACP] = a (2E)-enoyl-[ACP] + H2O. Involved in unsaturated fatty acids biosynthesis. Catalyzes the dehydration of short chain beta-hydroxyacyl-ACPs and long chain saturated and unsaturated beta-hydroxyacyl-ACPs. The sequence is that of 3-hydroxyacyl-[acyl-carrier-protein] dehydratase FabZ from Thermotoga neapolitana (strain ATCC 49049 / DSM 4359 / NBRC 107923 / NS-E).